The primary structure comprises 798 residues: ATP-dependent RecD2 DNA helicase (798 aa).

370–374 (GTGKT) lines the ATP pocket.

Belongs to the RecD family. RecD2 subfamily. In terms of assembly, interacts with SSB (sbbA).

The protein localises to the cytoplasm. Its subcellular location is the nucleoid. The catalysed reaction is Couples ATP hydrolysis with the unwinding of duplex DNA at the replication fork by translocating in the 5'-3' direction. This creates two antiparallel DNA single strands (ssDNA). The leading ssDNA polymer is the template for DNA polymerase III holoenzyme which synthesizes a continuous strand.. It carries out the reaction ATP + H2O = ADP + phosphate + H(+). In vivo may favor replication restart by preventing RecA from binding to blocked replication forks, avoiding unnecessary recombination during replication restart. Acts as a negative modulator of the RecA-ssDNA filament, may dissasemble RecA threads, can act as both a positive and negative regulator of strand exchange. Probably stabilizes or aids normal replication fork progression, is important for survival after treatment with DNA-damaging agents that can result in replication fork stress. Overcomes the inhibition of replication restart by RecA/RecO, probably by displacing RecA. Increasing levels inhibit PriA-dependent DNA replication initiation (but have little effect on ongoing replication) in vitro; may act by disturbing SsbA assembly. Probably has a role in recombinational DNA repair. Does not seem to contribute to mismatch repair. Has 5'-3' helicase activity that is probably ATP-dependent. This chain is ATP-dependent RecD2 DNA helicase, found in Bacillus subtilis (strain 168).